A 425-amino-acid chain; its full sequence is Trigger factor (425 aa).

A PPIase FKBP-type domain is found at Gly163–Pro248.

The protein belongs to the FKBP-type PPIase family. Tig subfamily.

It is found in the cytoplasm. The enzyme catalyses [protein]-peptidylproline (omega=180) = [protein]-peptidylproline (omega=0). Its function is as follows. Involved in protein export. Acts as a chaperone by maintaining the newly synthesized protein in an open conformation. Functions as a peptidyl-prolyl cis-trans isomerase. The chain is Trigger factor from Bacillus mycoides (strain KBAB4) (Bacillus weihenstephanensis).